Consider the following 685-residue polypeptide: DNA ligase (685 aa).

NAD(+) contacts are provided by residues 47–51, 96–97, and Glu-125; these read DSEYD and SL. Catalysis depends on Lys-127, which acts as the N6-AMP-lysine intermediate. NAD(+) contacts are provided by Arg-148, Glu-185, Lys-304, and Lys-328. Residues Cys-422, Cys-425, Cys-440, and Cys-446 each contribute to the Zn(2+) site. One can recognise a BRCT domain in the interval 605 to 685; it reads ADAQPLKGQT…ALLALFAANR (81 aa).

This sequence belongs to the NAD-dependent DNA ligase family. LigA subfamily. The cofactor is Mg(2+). It depends on Mn(2+) as a cofactor.

The catalysed reaction is NAD(+) + (deoxyribonucleotide)n-3'-hydroxyl + 5'-phospho-(deoxyribonucleotide)m = (deoxyribonucleotide)n+m + AMP + beta-nicotinamide D-nucleotide.. Its function is as follows. DNA ligase that catalyzes the formation of phosphodiester linkages between 5'-phosphoryl and 3'-hydroxyl groups in double-stranded DNA using NAD as a coenzyme and as the energy source for the reaction. It is essential for DNA replication and repair of damaged DNA. In Shewanella putrefaciens (strain CN-32 / ATCC BAA-453), this protein is DNA ligase.